The sequence spans 1034 residues: Receptor-type guanylate cyclase gcy-25 (1034 aa).

The first 16 residues, 1–16, serve as a signal peptide directing secretion; sequence MLLLLLLLKISTFVDS. Residues 17–409 are Extracellular-facing; that stretch reads FQIGHLEFEN…YDNNLCSDFH (393 aa). 5 N-linked (GlcNAc...) asparagine glycosylation sites follow: asparagine 28, asparagine 224, asparagine 301, asparagine 308, and asparagine 373. A helical membrane pass occupies residues 410–430; sequence VFMIAAIVFSILLIPMAIAFY. The Cytoplasmic segment spans residues 431 to 1034; that stretch reads LQRKEHLIQQ…DNSKKMFLNV (604 aa). The 286-residue stretch at 464–749 folds into the Protein kinase domain; that stretch reads RVSTISTARA…KITDAVNREF (286 aa). Residues 470–478 and lysine 497 contribute to the ATP site; that span reads TARASYSSI. Residues 758-785 are a coiled coil; it reads IDQMIEMIDEYSANLEQIVAERTRELEQ. A Guanylate cyclase domain is found at 821-951; sequence TLLVVDVCQF…DTVNMACRMA (131 aa).

It belongs to the adenylyl cyclase class-4/guanylyl cyclase family. In terms of tissue distribution, expressed in AQR, PQR and URX sensory neurons.

Its subcellular location is the cell membrane. It carries out the reaction GTP = 3',5'-cyclic GMP + diphosphate. Its function is as follows. Guanylate cyclase involved in the production of the second messenger cGMP. This is Receptor-type guanylate cyclase gcy-25 from Caenorhabditis elegans.